A 356-amino-acid chain; its full sequence is S-adenosylmethionine:tRNA ribosyltransferase-isomerase (356 aa).

This sequence belongs to the QueA family. Monomer.

The protein localises to the cytoplasm. It carries out the reaction 7-aminomethyl-7-carbaguanosine(34) in tRNA + S-adenosyl-L-methionine = epoxyqueuosine(34) in tRNA + adenine + L-methionine + 2 H(+). Its pathway is tRNA modification; tRNA-queuosine biosynthesis. In terms of biological role, transfers and isomerizes the ribose moiety from AdoMet to the 7-aminomethyl group of 7-deazaguanine (preQ1-tRNA) to give epoxyqueuosine (oQ-tRNA). The polypeptide is S-adenosylmethionine:tRNA ribosyltransferase-isomerase (Nitrosospira multiformis (strain ATCC 25196 / NCIMB 11849 / C 71)).